A 364-amino-acid chain; its full sequence is CCA-adding enzyme (364 aa).

2 residues coordinate ATP: G19 and R22. 2 residues coordinate CTP: G19 and R22. The Mg(2+) site is built by D32 and D34. R102, R148, and R151 together coordinate ATP. Residues R102, R148, and R151 each coordinate CTP.

This sequence belongs to the tRNA nucleotidyltransferase/poly(A) polymerase family. Bacterial CCA-adding enzyme type 2 subfamily. Mg(2+) is required as a cofactor.

The catalysed reaction is a tRNA precursor + 2 CTP + ATP = a tRNA with a 3' CCA end + 3 diphosphate. The enzyme catalyses a tRNA with a 3' CCA end + 2 CTP + ATP = a tRNA with a 3' CCACCA end + 3 diphosphate. In terms of biological role, catalyzes the addition and repair of the essential 3'-terminal CCA sequence in tRNAs without using a nucleic acid template. Adds these three nucleotides in the order of C, C, and A to the tRNA nucleotide-73, using CTP and ATP as substrates and producing inorganic pyrophosphate. tRNA 3'-terminal CCA addition is required both for tRNA processing and repair. Also involved in tRNA surveillance by mediating tandem CCA addition to generate a CCACCA at the 3' terminus of unstable tRNAs. While stable tRNAs receive only 3'-terminal CCA, unstable tRNAs are marked with CCACCA and rapidly degraded. The protein is CCA-adding enzyme of Bordetella pertussis (strain Tohama I / ATCC BAA-589 / NCTC 13251).